We begin with the raw amino-acid sequence, 597 residues long: Tubulin polyglutamylase ttll-4 (597 aa).

A compositionally biased stretch (polar residues) spans Met-1 to Ala-18. 2 disordered regions span residues Met-1–Arg-39 and Ser-80–Ser-107. A compositionally biased stretch (acidic residues) spans Tyr-26–Ser-35. Residues Gln-134–His-472 enclose the TTL domain. ATP is bound by residues Lys-250, Arg-256–Gly-257, Gln-278–Ile-281, and Lys-291–Asp-293. Arg-256 contributes to the a protein binding site. An L-glutamate-binding site is contributed by Arg-317. ATP is bound at residue Thr-338–Asn-339. 3 residues coordinate L-glutamate: Tyr-340, Ser-341, and Lys-358. Mg(2+) contacts are provided by Asp-418, Glu-431, and Asn-433. Residue Lys-449 coordinates L-glutamate.

It belongs to the tubulin--tyrosine ligase family. The cofactor is Mg(2+).

The catalysed reaction is L-glutamyl-[protein] + L-glutamate + ATP = gamma-L-glutamyl-L-glutamyl-[protein] + ADP + phosphate + H(+). In terms of biological role, monoglutamylase which modifies tubulin, adding a single glutamate on the gamma-carboxyl group of specific glutamate residues of target proteins. Involved in the side-chain initiation step of the polyglutamylation reaction but not in the elongation step. Preferentially modifies beta-tail tubulin over the alpha-tubulin. Involved in side-chain glutamylation of tubulin in sensory cilia. Together with ttll-5 and ttll-11, required for male mating. The chain is Tubulin polyglutamylase ttll-4 (ttll-4) from Caenorhabditis briggsae.